The chain runs to 473 residues: NADH-quinone oxidoreductase subunit N (473 aa).

14 helical membrane passes run 3–23, 30–50, 62–82, 99–119, 120–140, 153–173, 195–215, 230–252, 262–282, 291–311, 326–346, 368–388, 408–428, and 444–464; these read LHYL…LVIA, LAFY…CSLL, FSSM…FLWL, FYLL…SEHF, ASFF…IAYS, YLIL…IVYL, MLFT…LSLV, LPTT…WKLF, IVLT…NLLA, ILAF…FLFN, ALLF…SILM, AASL…LGFM, FLVI…MVML, and VASL…PALF.

Belongs to the complex I subunit 2 family. NDH-1 is composed of 13 different subunits. Subunits NuoA, H, J, K, L, M, N constitute the membrane sector of the complex.

The protein localises to the cell inner membrane. It catalyses the reaction a quinone + NADH + 5 H(+)(in) = a quinol + NAD(+) + 4 H(+)(out). In terms of biological role, NDH-1 shuttles electrons from NADH, via FMN and iron-sulfur (Fe-S) centers, to quinones in the respiratory chain. The immediate electron acceptor for the enzyme in this species is believed to be ubiquinone. Couples the redox reaction to proton translocation (for every two electrons transferred, four hydrogen ions are translocated across the cytoplasmic membrane), and thus conserves the redox energy in a proton gradient. The polypeptide is NADH-quinone oxidoreductase subunit N (Shewanella woodyi (strain ATCC 51908 / MS32)).